Consider the following 142-residue polypeptide: Lutropin subunit beta (142 aa).

The signal sequence occupies residues 1–21 (MEMLQGLLLLWLLLNVGGVWT). 6 cysteine pairs are disulfide-bonded: Cys-30/Cys-78, Cys-44/Cys-93, Cys-47/Cys-131, Cys-55/Cys-109, Cys-59/Cys-111, and Cys-114/Cys-121. Asn-34 is a glycosylation site (N-linked (GlcNAc...) asparagine).

Belongs to the glycoprotein hormones subunit beta family. Heterodimer of a common alpha chain and a unique beta chain which confers biological specificity to thyrotropin, lutropin, follitropin and gonadotropin.

It is found in the secreted. Functionally, promotes spermatogenesis and ovulation by stimulating the testes and ovaries to synthesize steroids. The chain is Lutropin subunit beta (LHB) from Panthera tigris altaica (Siberian tiger).